We begin with the raw amino-acid sequence, 419 residues long: UDP-N-acetylglucosamine 1-carboxyvinyltransferase (419 aa).

Residue 22–23 (KN) participates in phosphoenolpyruvate binding. Arginine 93 contacts UDP-N-acetyl-alpha-D-glucosamine. Cysteine 117 (proton donor) is an active-site residue. Position 117 is a 2-(S-cysteinyl)pyruvic acid O-phosphothioketal (cysteine 117). Residues aspartate 306 and isoleucine 328 each coordinate UDP-N-acetyl-alpha-D-glucosamine.

The protein belongs to the EPSP synthase family. MurA subfamily.

The protein localises to the cytoplasm. The catalysed reaction is phosphoenolpyruvate + UDP-N-acetyl-alpha-D-glucosamine = UDP-N-acetyl-3-O-(1-carboxyvinyl)-alpha-D-glucosamine + phosphate. It participates in cell wall biogenesis; peptidoglycan biosynthesis. Cell wall formation. Adds enolpyruvyl to UDP-N-acetylglucosamine. This is UDP-N-acetylglucosamine 1-carboxyvinyltransferase from Idiomarina loihiensis (strain ATCC BAA-735 / DSM 15497 / L2-TR).